Reading from the N-terminus, the 107-residue chain is Iron-sulfur cluster assembly protein CyaY (107 aa).

Belongs to the frataxin family.

In terms of biological role, involved in iron-sulfur (Fe-S) cluster assembly. May act as a regulator of Fe-S biogenesis. The protein is Iron-sulfur cluster assembly protein CyaY of Neisseria gonorrhoeae (strain ATCC 700825 / FA 1090).